Consider the following 352-residue polypeptide: 3-isopropylmalate dehydrogenase (352 aa).

76–89 (GPKWENLPHEHKPE) contacts NAD(+). Positions 96, 106, 134, and 219 each coordinate substrate. The Mg(2+) site is built by Asp-219, Asp-243, and Asp-247. 276 to 288 (GSAPDIAGQNKAN) contacts NAD(+).

Belongs to the isocitrate and isopropylmalate dehydrogenases family. LeuB type 1 subfamily. Homodimer. Mg(2+) serves as cofactor. It depends on Mn(2+) as a cofactor.

The protein resides in the cytoplasm. It carries out the reaction (2R,3S)-3-isopropylmalate + NAD(+) = 4-methyl-2-oxopentanoate + CO2 + NADH. It participates in amino-acid biosynthesis; L-leucine biosynthesis; L-leucine from 3-methyl-2-oxobutanoate: step 3/4. Functionally, catalyzes the oxidation of 3-carboxy-2-hydroxy-4-methylpentanoate (3-isopropylmalate) to 3-carboxy-4-methyl-2-oxopentanoate. The product decarboxylates to 4-methyl-2 oxopentanoate. This is 3-isopropylmalate dehydrogenase from Chlorobium chlorochromatii (strain CaD3).